Consider the following 514-residue polypeptide: MNLTEKWKDLLEAEGADMPEIATATKQKIMSKIFENQDRDINNDPMYRDPQLVEAFNAGLNEAVVNGDHGYDPANIAQGVTTGAVTNIGPTVMGMVRRAIPQLIAFDIAGVQPMTGPTSQVFTLRSVYGKDPLTGAEAFHPTRQADASFSGQAAASTIADFPTTGAATDGTPYKAEVTTSGGDVSMRYFLALGAVTLAVAGQMTATEYTDGVAGGLLVEIDAGMATSQAELQENFNGSSNNEWNEMSFRIDKQVVEAKSRQLKAQYSIELAQDLRAVHGLDADAELSGILANEVMVELNREIVNLVNSQAQIGKSGWTQGAGAAGVFDFSDAVDVKGARWAGEAYKALLIQIEKEANEIGRQTGRGNGNFIIASRNVVSALSMTDTLVGPAAQGMQDGSMNTDTNQTVFAGVLGGRFKVYIDQYAVNDYFTVGFKGSTEMDAGVFYSPYVPLTPLRGSDSKNFQPVIGFKTRYGVQVNPFADPTASATKVGNGAPVAASMGKNAYFRRVFVKGL.

It belongs to the T4 phage capsid protein family. Homohexamer. Interacts with the portal protein. Interacts with the capsid vertex protein that forms pentamers. Post-translationally, a proteolytic cleavage by the prohead core protein protease gives rise to the mature major capsid protein during virus maturation.

It localises to the virion. In terms of biological role, major capsid protein that self-associates to form hexamers, building most of the capsid in association with pentons made of the capsid vertex protein and one dodecamer of the portal protein. The chain is Major capsid protein from Vibrio parahaemolyticus (KVP40).